A 220-amino-acid chain; its full sequence is Tumor protein p53-inducible nuclear protein 2 (220 aa).

Low complexity predominate over residues 1 to 12 (MFQRLSSLFFST). Disordered stretches follow at residues 1-24 (MFQRLSSLFFSTPSPPEDPDCPRA), 41-69 (PDSYAAPPSPGAAPAPAGRPPPAPSLMDE), and 119-220 (PGSP…QFNY). Residue S14 is modified to Phosphoserine. The short motif at 26 to 41 (VSEEDEVDGWLIIDLP) is the LIR element. A compositionally biased stretch (pro residues) spans 47–64 (PPSPGAAPAPAGRPPPAP). Residue S136 is modified to Phosphoserine. Low complexity predominate over residues 152-170 (HAAPLPARAALLEKAGQVR). Polar residues predominate over residues 205–220 (NQSSFIYQPCQRQFNY).

As to quaternary structure, interacts with VMP1, GABARAP, GABARAPL1, GABARAPL2, MAP1LC3A, MAP1LC3B, MAP1LC3C and THRA.

The protein localises to the cytoplasm. It localises to the cytosol. It is found in the nucleus. The protein resides in the PML body. Its subcellular location is the cytoplasmic vesicle. The protein localises to the autophagosome. In terms of biological role, dual regulator of transcription and autophagy. Positively regulates autophagy and is required for autophagosome formation and processing. May act as a scaffold protein that recruits MAP1LC3A, GABARAP and GABARAPL2 and brings them to the autophagosome membrane by interacting with VMP1 where, in cooperation with the BECN1-PI3-kinase class III complex, they trigger autophagosome development. Acts as a transcriptional activator of THRA. This is Tumor protein p53-inducible nuclear protein 2 (TP53INP2) from Homo sapiens (Human).